The sequence spans 411 residues: Na(+)-translocating NADH-quinone reductase subunit F (411 aa).

The helical transmembrane segment at 5–25 threads the bilayer; that stretch reads VILALGIAAFTVIVLVLVAII. The 95-residue stretch at 36-130 folds into the 2Fe-2S ferredoxin-type domain; sequence GDITIDINDD…NMEVELPEEI (95 aa). Residues cysteine 73, cysteine 79, cysteine 82, and cysteine 114 each contribute to the [2Fe-2S] cluster site. An FAD-binding FR-type domain is found at 133–273; the sequence is VKKWECTVIS…SGPFGEFFAK (141 aa).

Belongs to the NqrF family. As to quaternary structure, composed of six subunits; NqrA, NqrB, NqrC, NqrD, NqrE and NqrF. [2Fe-2S] cluster is required as a cofactor. The cofactor is FAD.

It is found in the cell inner membrane. It catalyses the reaction a ubiquinone + n Na(+)(in) + NADH + H(+) = a ubiquinol + n Na(+)(out) + NAD(+). NQR complex catalyzes the reduction of ubiquinone-1 to ubiquinol by two successive reactions, coupled with the transport of Na(+) ions from the cytoplasm to the periplasm. The first step is catalyzed by NqrF, which accepts electrons from NADH and reduces ubiquinone-1 to ubisemiquinone by a one-electron transfer pathway. The chain is Na(+)-translocating NADH-quinone reductase subunit F from Haemophilus influenzae (strain PittGG).